Consider the following 207-residue polypeptide: Thaumatin-like protein 1 (207 aa).

Intrachain disulfides connect Cys-9–Cys-202, Cys-50–Cys-60, Cys-65–Cys-71, Cys-117–Cys-191, Cys-122–Cys-174, Cys-130–Cys-140, Cys-144–Cys-153, and Cys-154–Cys-161.

The protein belongs to the thaumatin family. Monomer. Post-translationally, not glycosylated.

The protein resides in the secreted. In terms of biological role, acidic thaumatin-like protein. Exhibits weak beta-1,3-glucanase activity with laminarin as substrate. The chain is Thaumatin-like protein 1 (TLP1) from Manilkara zapota (Sapodilla plum).